Consider the following 461-residue polypeptide: Cysteine--tRNA ligase (461 aa).

C30 contacts Zn(2+). The 'HIGH' region signature appears at 32–42; the sequence is VTIYDLCHIGH. Positions 211, 236, and 240 each coordinate Zn(2+). The 'KMSKS' region motif lies at 268–272; it reads KMSKS. K271 provides a ligand contact to ATP.

Belongs to the class-I aminoacyl-tRNA synthetase family. Monomer. It depends on Zn(2+) as a cofactor.

It localises to the cytoplasm. The catalysed reaction is tRNA(Cys) + L-cysteine + ATP = L-cysteinyl-tRNA(Cys) + AMP + diphosphate. The chain is Cysteine--tRNA ligase from Shewanella putrefaciens (strain CN-32 / ATCC BAA-453).